Here is an 88-residue protein sequence, read N- to C-terminus: FXYD domain-containing ion transport regulator 3 (88 aa).

The not cleaved signal peptide spans 1-20 (MQEVVLSLLVLLAGLPTLDA). Residues 1 to 38 (MQEVVLSLLVLLAGLPTLDANDPENKNDPFYYDWYSLR) lie on the Extracellular side of the membrane. A helical transmembrane segment spans residues 39–59 (VGGLICAGILCALGIIVLMSG). The Cytoplasmic segment spans residues 60–88 (KCKCKFRQKPSHRPGEGPPLITPGSAHNC). Residues 67-88 (QKPSHRPGEGPPLITPGSAHNC) are disordered.

The protein belongs to the FXYD family. In terms of assembly, regulatory subunit of the sodium/potassium-transporting ATPase which is composed of a catalytic alpha subunit, a non-catalytic beta subunit and an additional regulatory subunit. Interacts with catalytic alpha subunit ATP1A1. Also interacts with non-catalytic beta subunit ATP1B1. Interacts with the ATP1A1-ATP1B1, ATP1A2-ATP1B1 and ATP1A3-ATP1B1 NKA isozymes. Glutathionylated. Expressed at high levels in heart, skeletal muscle and liver with low levels of expression in breast, brain, lung, stomach and colon. In the gastric gland, mainly expressed in the mucus cells forming the upper part of the gland and is absent from the parietal cells.

Its subcellular location is the cell membrane. Functionally, associates with and regulates the activity of the sodium/potassium-transporting ATPase (NKA) which transports Na(+) out of the cell and K(+) into the cell. Reduces glutathionylation of the NKA beta-1 subunit ATP1B1, thus reversing glutathionylation-mediated inhibition of ATP1B1. Induces a hyperpolarization-activated chloride current when expressed in Xenopus oocytes. This is FXYD domain-containing ion transport regulator 3 (Fxyd3) from Mus musculus (Mouse).